A 65-amino-acid polypeptide reads, in one-letter code: Ferredoxin-1 (65 aa).

Residues 3-31 (RKFYVDQDECIACESCVEIAPGAFAMDPE) enclose the 4Fe-4S ferredoxin-type domain. [4Fe-4S] cluster is bound by residues cysteine 12, cysteine 15, cysteine 18, and cysteine 55.

Homodimer. [4Fe-4S] cluster serves as cofactor.

Functionally, ferredoxins are iron-sulfur proteins that transfer electrons in a wide variety of metabolic reactions. This Desulfocurvibacter africanus (Desulfovibrio africanus) protein is Ferredoxin-1 (fd1).